The chain runs to 497 residues: Homeotic protein empty spiracles (497 aa).

3 disordered regions span residues 34-117, 161-262, and 441-497; these read NDVS…HLSP, SPLQ…MMMP, and NRRT…DASH. Positions 35-50 are enriched in polar residues; the sequence is DVSTAGGNSTPDLSGP. Pro residues predominate over residues 51-68; the sequence is QSPPPGERNVPGSPPQTP. Low complexity predominate over residues 96–117; sequence PHAQQQQQQHLQAPHPHPHLSP. Over residues 161–176 the composition is skewed to polar residues; it reads SPLQTRLSPETEQPQM. 2 stretches are compositionally biased toward low complexity: residues 208 to 239 and 248 to 262; these read PKSVSPQSSQPSSSPTLLISSPHATPPQQQQQ and PAMMHPGGAGPMMMP. Positions 391 to 450 form a DNA-binding region, homeobox; the sequence is PKRIRTAFSPSQLLKLEHAFESNQYVVGAERKALAQNLNLSETQVKVWFQNRRTKHKRMQ. Residues 470–497 show a composition bias toward acidic residues; sequence GDEDDDELIDMEMDECPSDEEHELDASH.

Belongs to the EMX homeobox family.

The protein resides in the nucleus. Its function is as follows. Acts as a homeotic selector gene controlling antennal and mandibular segment identity. In Drosophila melanogaster (Fruit fly), this protein is Homeotic protein empty spiracles (ems).